The chain runs to 1799 residues: Bromodomain and WD repeat-containing protein 3 (1799 aa).

WD repeat units follow at residues 170 to 209 (IKMHKRILGHLSSVYCVAFDRSGRRIFTGSDDCLVKIWAT), 213 to 251 (RLLATLRGHSAEISDMAVNYENTLIAAGSCDKVVRVWCL), 255 to 297 (APVA…FWQW), 307 to 347 (RPVK…IYYL), 353 to 393 (EKIA…IWQY), 400 to 452 (SIVL…VWNS), 456 to 495 (QLLHTLSGHDDEVFVLEAHPFDQRIILSAGHDGNIFIWDL), and 502 to 542 (RNYF…LFGF). S693 carries the post-translational modification Phosphoserine. The tract at residues 766-912 (KKPSYPIQRN…KKKKGGLVSM (147 aa)) is disordered. Residues 784 to 794 (SLRRTQRKRQH) are compositionally biased toward basic residues. Over residues 795 to 816 (TYLTRSNIEHNSQASSQTSGVQ) the composition is skewed to polar residues. A compositionally biased stretch (acidic residues) spans 817–828 (EDSDSSSEEDET). Low complexity predominate over residues 845–858 (SESSSSDSSSEYSD). Positions 875–884 (RQATQKIYSS) are enriched in polar residues. S884 and S885 each carry phosphoserine. A compositionally biased stretch (basic residues) spans 897 to 907 (KKPKQTKKKKG). The Bromo 1 domain occupies 1136-1243 (WGAHSRDEEC…DVLLRFIGDQ (108 aa)). 4 disordered regions span residues 1258–1291 (EDPDSSDLEEDSEMVDLDSDGPGTSSGRRAKCRG), 1321–1366 (EPFR…IDTP), 1435–1482 (IQSQ…QNTS), and 1517–1723 (SPSS…AKRA). The segment covering 1260–1276 (PDSSDLEEDSEMVDLDS) has biased composition (acidic residues). Positions 1298–1427 (CNPDAWKKQC…ALFENHIKNI (130 aa)) constitute a Bromo 2 domain. Residues 1333 to 1348 (PVQQQQEGESSQSVPP) show a composition bias toward low complexity. Positions 1438 to 1450 (QKRRRPRYRKRLR) are enriched in basic residues. Low complexity-rich tracts occupy residues 1451–1463 (SSSSSLSSSRAPS) and 1517–1530 (SPSSFSGYSRSGNS). Residues S1574 and S1576 each carry the phosphoserine modification. Residues 1584-1596 (GEEKEMKETKEQV) show a composition bias toward basic and acidic residues. A compositionally biased stretch (low complexity) spans 1598-1623 (LSSSESGELGSSLSSESTSGSDSDSE). A compositionally biased stretch (basic and acidic residues) spans 1624–1640 (STSRTDQDYVDGDHDYS). Basic residues-rich tracts occupy residues 1646 to 1663 (RPKRKLRKQHTNGKRNWK) and 1681 to 1694 (RGGRGRGGRGRGGR). Position 1760 is a phosphoserine (S1760).

Its function is as follows. Plays a role in the regulation of cell morphology and cytoskeletal organization. Required in the control of cell shape. The polypeptide is Bromodomain and WD repeat-containing protein 3 (Brwd3) (Mus musculus (Mouse)).